Here is a 346-residue protein sequence, read N- to C-terminus: Olfactory receptor 8G5 (346 aa).

Topologically, residues 1-60 (MIIYKQGITFLQKENNNTIHLNTMFFLSPAETHQRMAAENHSFVTKFILVGLTEKSELQL) are extracellular. N16 and N40 each carry an N-linked (GlcNAc...) asparagine glycan. The helical transmembrane segment at 61–81 (PLFLVFLGIYVVTVLGNLGMI) threads the bilayer. Topologically, residues 82-89 (TLIGLSSH) are cytoplasmic. The helical transmembrane segment at 90–110 (LHTPMYCFLSSLSFIDFCHST) threads the bilayer. Over 111–134 (VITPKMLVNFVTEKNIISYPECMT) the chain is Extracellular. Cysteines 132 and 214 form a disulfide. Residues 135–155 (QLYFFLVFAIAECHMLAAMAY) form a helical membrane-spanning segment. The Cytoplasmic segment spans residues 156-174 (DGYVAICSPLLYSIIISNK). Residues 175–195 (ACFSLILVVYVIGLICASAHI) traverse the membrane as a helical segment. Residues 196–232 (GCMFRVQFCKFDVINHYFCDLISILKLSCSSTYINEL) are Extracellular-facing. The chain crosses the membrane as a helical span at residues 233–252 (LILIFSGINILVPSLTILSS). At 253 to 272 (YIFIIASILRIRYTEGRSKA) the chain is on the cytoplasmic side. A helical transmembrane segment spans residues 273–293 (FSTCSSHISAVSVFFGSAAFM). At 294–306 (YLQPSSVSSMDQG) the chain is on the extracellular side. The chain crosses the membrane as a helical span at residues 307-327 (KVSSVFYTIVVPMLNPLIYSL). Residues 328–346 (RNKDVHVALKKTLGKRTFL) lie on the Cytoplasmic side of the membrane.

The protein belongs to the G-protein coupled receptor 1 family.

Its subcellular location is the cell membrane. Odorant receptor. In Homo sapiens (Human), this protein is Olfactory receptor 8G5 (OR8G5).